A 464-amino-acid chain; its full sequence is MDYLPLFHNLKGRRVLLVGGGEIALRKARLLADAGAVLRVVAPQIEAALAEQVREGGGDCLPRGYAQGDLDGCVLAIAATDDPLLNARVSRDAHEHGVPVNVVDSPELCSVIFPAIVDRSPLLVAVSSGGDAPVLARLMRARIETWIPAGYGRLAGLARRFRAQVKRLLPDVRQRRVFWEEVFQGPIAERLLSGQETEAERLLEAKLAGAAPKALGEVYLVGAGPGDPDLLTFRALRLMQQADVVLYDRLVAPAIVELCRRDAERIYVGKRRAEHALPQEQINRLLVRLAGEGKRVLRLKGGDPFIFGRGGEEIEELAAHGIPFQVVPGITAASGCAAYAGIPLTHRDHAQSVRFVTGHLKDGSFDLPWADLVAPAQTLVVYMGLVGLPVICQRLIEHGRAAATPVALIQQGTTPQQRVIVSTLAELPARVEREQVSAPTLLIVGEVVRLRDKLAWFEGRQSAD.

The tract at residues 1 to 203 is precorrin-2 dehydrogenase /sirohydrochlorin ferrochelatase; it reads MDYLPLFHNL…GQETEAERLL (203 aa). NAD(+) contacts are provided by residues 22–23 and 43–44; these read EI and PQ. Ser-128 carries the post-translational modification Phosphoserine. Residues 216 to 464 form a uroporphyrinogen-III C-methyltransferase region; the sequence is GEVYLVGAGP…AWFEGRQSAD (249 aa). Residue Pro-225 coordinates S-adenosyl-L-methionine. Asp-248 serves as the catalytic Proton acceptor. The Proton donor role is filled by Lys-270. Residues 301 to 303, Ile-306, 331 to 332, Met-383, and Gly-412 each bind S-adenosyl-L-methionine; these read GGD and TA.

It in the N-terminal section; belongs to the precorrin-2 dehydrogenase / sirohydrochlorin ferrochelatase family. In the C-terminal section; belongs to the precorrin methyltransferase family.

It catalyses the reaction uroporphyrinogen III + 2 S-adenosyl-L-methionine = precorrin-2 + 2 S-adenosyl-L-homocysteine + H(+). The enzyme catalyses precorrin-2 + NAD(+) = sirohydrochlorin + NADH + 2 H(+). It carries out the reaction siroheme + 2 H(+) = sirohydrochlorin + Fe(2+). Its pathway is cofactor biosynthesis; adenosylcobalamin biosynthesis; precorrin-2 from uroporphyrinogen III: step 1/1. It participates in cofactor biosynthesis; adenosylcobalamin biosynthesis; sirohydrochlorin from precorrin-2: step 1/1. The protein operates within porphyrin-containing compound metabolism; siroheme biosynthesis; precorrin-2 from uroporphyrinogen III: step 1/1. It functions in the pathway porphyrin-containing compound metabolism; siroheme biosynthesis; siroheme from sirohydrochlorin: step 1/1. Its pathway is porphyrin-containing compound metabolism; siroheme biosynthesis; sirohydrochlorin from precorrin-2: step 1/1. Functionally, multifunctional enzyme that catalyzes the SAM-dependent methylations of uroporphyrinogen III at position C-2 and C-7 to form precorrin-2 via precorrin-1. Then it catalyzes the NAD-dependent ring dehydrogenation of precorrin-2 to yield sirohydrochlorin. Finally, it catalyzes the ferrochelation of sirohydrochlorin to yield siroheme. The protein is Siroheme synthase of Azotobacter vinelandii (strain DJ / ATCC BAA-1303).